Consider the following 1066-residue polypeptide: E3 ubiquitin-protein ligase RNF31 (1066 aa).

The interval 1 to 479 is polyubiquitin-binding; it reads MPGDEERGFL…PEKQRQDKMR (479 aa). The PUB domain occupies 70–141; that stretch reads TLSTALNILE…SFPEGQEEPD (72 aa). The disordered stretch occupies residues 251 to 287; it reads LRQALPGSHQTASLSSSLPASSQPRPPSSSLALGDSS. A compositionally biased stretch (low complexity) spans 262–287; it reads ASLSSSLPASSQPRPPSSSLALGDSS. 2 consecutive RanBP2-type zinc fingers follow at residues 293–325 and 344–373; these read PANACLPWHCLTCATLNEPWAVFCAVCSQPKGC and ARDQWACQSCTFENEAAAVLCAICERPRLA. A Phosphoserine modification is found at S377. Residues 403 to 432 form a RanBP2-type 3 zinc finger; it reads QPQVWYCDHCTFCNSGPVWVCAMCNRTRDP. Residues 434-478 are disordered; sequence PTQPALQSYPSSLEKGRPKPGSSQHLGSSLPASCGDPEKQRQDKM. A compositionally biased stretch (polar residues) spans 454–464; sequence GSSQHLGSSLP. The span at 469 to 478 shows a compositional bias: basic and acidic residues; the sequence is DPEKQRQDKM. Residues 557 to 610 are interaction with RBCK1; the sequence is GNLDEAVEECVRARRRKVHELQSLGFGPKEGSLQALFQHGGDVARALTELQRQR. In terms of domain architecture, UBA spans 558–609; the sequence is NLDEAVEECVRARRRKVHELQSLGFGPKEGSLQALFQHGGDVARALTELQRQ. Residues 689-923 form a TRIAD supradomain region; sequence LAQECAVCGW…KSLHGHHPRD (235 aa). Zn(2+)-binding residues include C693, C696, C711, C713, C716, C719, C738, C741, C793, C796, C811, C814, C819, C822, H830, C835, C865, and C868. The RING-type 1 zinc-finger motif lies at 693–743; it reads CAVCGWALPRNRMQALISCECTICPECFRQHFTIALKEKHITDMVCPACGR. The IBR-type zinc finger occupies 773–835; that stretch reads ALFHKKLTEA…WEEQHRGRSC (63 aa). The RING-type 2; atypical zinc-finger motif lies at 865 to 895; that stretch reads CPKCKFSYALARGGCMHFHCTQCRHQFCSGC. C879 is a catalytic residue. The Zn(2+) site is built by C884, C887, C892, C895, C910, and H919. The tract at residues 904-1066 is LDD domain; that stretch reads KCPDPNCKVK…LGQSIARRRK (163 aa).

Belongs to the RBR family. As to quaternary structure, component of the LUBAC complex (linear ubiquitin chain assembly complex) which consists of SHARPIN, RBCK1 and RNF31. LUBAC has a MW of approximately 600 kDa suggesting a heteromultimeric assembly of its subunits. Associates with the TNF-R1 signaling complex (TNF-RSC) in a stimulation-dependent manner. Interacts (via the PUB domain) with OTULIN (via the PIM motif); the interaction is direct. Interacts (via the PUB domain) with VCP (via the PIM motif). Interacts (via the PUB domain) with SPATA2 (via the PIM motif); interaction is direct and bridges RNF31 and CYLD. Interacts with CYLD; the interaction is indirect and is mediated via SPATA2. Interacts with MUSK. Interacts with CARD11, promoting linear ubiquitination of BCL10. In terms of processing, autoubiquitinated. Interaction with OTULIN is required to suppress formation of 'Met-1'-linked polyubiquitin chains and prevent subsequent inactivation of the LUBAC complex. Cleaved by caspase during apoptosis. As to expression, widely expressed (at protein level). Not expressed in heart.

The protein localises to the cytoplasm. The catalysed reaction is [E2 ubiquitin-conjugating enzyme]-S-ubiquitinyl-L-cysteine + [acceptor protein]-L-lysine = [E2 ubiquitin-conjugating enzyme]-L-cysteine + [acceptor protein]-N(6)-ubiquitinyl-L-lysine.. It functions in the pathway protein modification; protein ubiquitination. E3 ubiquitin-protein ligase component of the LUBAC complex which conjugates linear ('Met-1'-linked) polyubiquitin chains to substrates and plays a key role in NF-kappa-B activation and regulation of inflammation. LUBAC conjugates linear polyubiquitin to IKBKG and RIPK1 and is involved in activation of the canonical NF-kappa-B and the JNK signaling pathways. Linear ubiquitination mediated by the LUBAC complex interferes with TNF-induced cell death and thereby prevents inflammation. LUBAC is recruited to the TNF-R1 signaling complex (TNF-RSC) following polyubiquitination of TNF-RSC components by BIRC2 and/or BIRC3 and to conjugate linear polyubiquitin to IKBKG and possibly other components contributing to the stability of the complex. The LUBAC complex is also involved in innate immunity by conjugating linear polyubiquitin chains at the surface of bacteria invading the cytosol to form the ubiquitin coat surrounding bacteria. LUBAC is not able to initiate formation of the bacterial ubiquitin coat, and can only promote formation of linear polyubiquitins on pre-existing ubiquitin. Recruited to the surface of bacteria by RNF213, which initiates the bacterial ubiquitin coat. The bacterial ubiquitin coat acts as an 'eat-me' signal for xenophagy and promotes NF-kappa-B activation. Together with OTULIN, the LUBAC complex regulates the canonical Wnt signaling during angiogenesis. RNF31 is required for linear ubiquitination of BCL10, thereby promoting TCR-induced NF-kappa-B activation. Binds polyubiquitin of different linkage types. The sequence is that of E3 ubiquitin-protein ligase RNF31 from Mus musculus (Mouse).